Here is a 3567-residue protein sequence, read N- to C-terminus: Sushi, von Willebrand factor type A, EGF and pentraxin domain-containing protein 1 (3567 aa).

An N-terminal signal peptide occupies residues 1–17 (MWSRLAFCCWALALVSG). The VWFA domain occupies 84 to 265 (ELVFLVDESS…LARRALHEDL (182 aa)). A glycan (N-linked (GlcNAc...) asparagine) is linked at Asn187. 3 Sushi domains span residues 377 to 436 (VHCP…FCRV), 437 to 496 (RTCP…RCVE), and 497 to 561 (RHCA…VCKD). Cystine bridges form between Cys379–Cys421, Cys407–Cys434, Cys439–Cys481, Cys467–Cys494, Cys499–Cys544, and Cys530–Cys559. HYR domains follow at residues 560–644 (KDVE…KVID) and 645–724 (VEPP…VIKG). The region spanning 725-789 (SPCEVPFTPV…YSTEWPDCAI (65 aa)) is the Sushi 4 domain. 20 disulfide bridges follow: Cys727–Cys769, Cys753–Cys787, Cys1196–Cys1207, Cys1201–Cys1216, Cys1218–Cys1227, Cys1234–Cys1245, Cys1239–Cys1254, Cys1256–Cys1265, Cys1272–Cys1283, Cys1277–Cys1292, Cys1294–Cys1303, Cys1310–Cys1321, Cys1315–Cys1330, Cys1332–Cys1341, Cys1348–Cys1359, Cys1353–Cys1368, Cys1370–Cys1379, Cys1386–Cys1397, Cys1391–Cys1406, and Cys1408–Cys1417. Positions 1192-1228 (VFHECFLNPCHNSGTCQQLGRGYVCLCPPGYTGLKCE) constitute an EGF-like 1 domain. Positions 1230–1266 (DIDECSSLPCLNGGICRDQVGGFTCECSLGYSGQICE) constitute an EGF-like 2; calcium-binding domain. The 37-residue stretch at 1268–1304 (NINECISSPCLNKGTCTDGLASYRCTCVKGYMGVHCE) folds into the EGF-like 3; calcium-binding domain. An EGF-like 4; calcium-binding domain is found at 1306 to 1342 (DVNECQSSPCLNNAVCKDQVGGFSCKCPPGFLGTRCE). One can recognise an EGF-like 5; calcium-binding domain in the interval 1344–1380 (NVDECLSQPCQNGATCKDGANSFRCQCPAGFTGTHCE). The region spanning 1382–1418 (NINECQSNPCRNQATCVDELNSYSCKCQPGFSGHRCE) is the EGF-like 6; calcium-binding domain. The Pentraxin (PTX) domain maps to 1423–1627 (SGFNLDFEVS…VKVDSSSMFC (205 aa)). Sushi domains lie at 1628 to 1686 (SDCP…HCER) and 1687 to 1744 (IRCG…SCLD). Intrachain disulfides connect Cys1630–Cys1671, Cys1657–Cys1684, Cys1689–Cys1729, Cys1715–Cys1742, Cys1748–Cys1760, Cys1754–Cys1769, Cys1771–Cys1782, Cys1788–Cys1828, Cys1814–Cys1841, Cys1846–Cys1886, Cys1872–Cys1899, Cys1904–Cys1944, Cys1930–Cys1957, Cys1962–Cys2002, Cys1988–Cys2015, Cys2020–Cys2060, Cys2046–Cys2077, Cys2082–Cys2125, Cys2111–Cys2140, Cys2145–Cys2185, Cys2171–Cys2198, Cys2203–Cys2244, Cys2230–Cys2258, Cys2263–Cys2303, Cys2289–Cys2317, Cys2322–Cys2362, Cys2348–Cys2375, Cys2380–Cys2421, Cys2407–Cys2434, Cys2439–Cys2479, Cys2465–Cys2492, Cys2497–Cys2537, Cys2523–Cys2550, Cys2555–Cys2595, and Cys2581–Cys2607. Positions 1744 to 1783 (DVDECAVGSDCSEHASCLNTNGSYVCSCNPPYTGDGKNCA) constitute an EGF-like 7; calcium-binding domain. 14 Sushi domains span residues 1780 to 1843 (KNCA…SCEA), 1844 to 1901 (ISCG…VCEL), 1902 to 1959 (VKCS…SCQL), 1960 to 2017 (VSCG…QCLA), 2018 to 2079 (VSCD…RCIA), 2080 to 2142 (HFCE…QCIP), 2143 to 2200 (VRCG…TCHP), 2201 to 2260 (VSCN…SCTP), 2261 to 2319 (LNCG…KCVP), 2320 to 2377 (TKCA…ICKM), 2378 to 2436 (VLCP…ECVP), 2437 to 2494 (VECP…MCKP), 2495 to 2552 (IECP…SCDA), and 2553 to 2609 (IHCS…TCVP). An important for the interaction with integrin ITGA9:ITGB1 region spans residues 2638–2645 (DMMEVPYL). 14 Sushi domains span residues 2660 to 2711 (NTKE…SCIS), 2712 to 2769 (IECD…RCEA), 2770 to 2827 (ISCS…MCIP), 2828 to 2885 (VDCG…SCMP), 2886 to 2943 (VRCP…VCKP), 2944 to 3001 (ATCG…SCLP), 3002 to 3057 (CRCS…LCEH), 3058 to 3115 (AQCG…TCEP), 3116 to 3174 (LSCG…TCSP), 3175 to 3234 (KKCP…SCIP), 3235 to 3292 (VVCG…VCRE), 3293 to 3350 (NRCE…LCKP), 3351 to 3409 (NPCP…RCEK), and 3410 to 3466 (ISCG…VCRA). 33 cysteine pairs are disulfide-bonded: Cys2682-Cys2709, Cys2714-Cys2754, Cys2740-Cys2767, Cys2772-Cys2812, Cys2798-Cys2825, Cys2830-Cys2870, Cys2856-Cys2883, Cys2888-Cys2928, Cys2914-Cys2941, Cys2946-Cys2986, Cys2972-Cys2999, Cys3004-Cys3043, Cys3029-Cys3055, Cys3060-Cys3100, Cys3086-Cys3113, Cys3118-Cys3159, Cys3144-Cys3172, Cys3177-Cys3217, Cys3203-Cys3232, Cys3237-Cys3277, Cys3263-Cys3290, Cys3295-Cys3335, Cys3321-Cys3348, Cys3353-Cys3394, Cys3380-Cys3407, Cys3412-Cys3452, Cys3438-Cys3464, Cys3500-Cys3510, Cys3504-Cys3516, Cys3518-Cys3527, Cys3532-Cys3542, Cys3536-Cys3548, and Cys3550-Cys3559. 2 consecutive EGF-like domains span residues 3496-3528 (EEPICILPCLNGGRCVAPYQCDCPTGWTGSRCH) and 3529-3560 (TATCQSPCLNGGKCIRPNRCHCLSAWTGHDCS).

Interacts (via Sushi domain 21) with ITGA9:ITGB1; thereby inhibits Ca(2+) intracellular signaling and as a result represses vasocontraction. Interacts (via Sushi domain 21) with ITGA4:ITGB1; thereby inhibits Ca(2+) intracellular signaling and as a result represses vasocontraction. Interacts with ANGPT1 and ANGPT2. Interacts with PEAR1 (via extracellular domain). Interacts with HSPG2, TLN1, FN1, COPA, CCT2, IQGAP1, LAMC1 and NID1. Interacts (via C-terminus) with TIE1. As to expression, expressed in the media layer of the arterial wall (at protein level). Highly expressed in lung and placenta, weakly expressed in the kidney, heart, brain and spleen. Also expressed in bone and periosteum, but not in cartilage and skeletal muscle.

The protein localises to the secreted. It is found in the nucleus. The protein resides in the cytoplasm. Its subcellular location is the membrane. Required for morphological development, cell alignment and migration of lymphatic endothelial cells during embryonic development, potentially via modulation of ANGPT2-TIE1 signaling and subsequent activation of FOXC2 transcription. Required for embryonic lymphatic vascular development, via mediating the correct formation of the first lymphovenous contact site and tight association of the lymphatic endothelium with the venous endothelium. Represses PRKCA-mediated L-type voltage-gated channel Ca(2+) influx and ROCK-mediated calcium sensitivity in vascular smooth muscle cells, via its interaction with integrins, thereby inhibiting vasocontraction. Promotes platelet activation, via its interaction with PEAR1 and subsequent activation of AKT/mTOR signaling. Plays a role in epidermal development and keratinocyte differentiation, independent of cell-cell adhesion. May play a role in initial cell attachment of stromal osteogenic cells. May promote myoblast cell adhesion when in the presence of integrin ITGA9:ITGB1. In Mus musculus (Mouse), this protein is Sushi, von Willebrand factor type A, EGF and pentraxin domain-containing protein 1 (Svep1).